The chain runs to 649 residues: Threonine--tRNA ligase (649 aa).

The TGS domain maps to 1-60 (MHVTLPDGKQLDLQAGATALDVARALGPRLAQDALAALVNGELMDLMTPLPEGAQVRLIT). Residues 248-544 (DHRKLGRELE…LIEHYGGDFP (297 aa)) form a catalytic region. Zn(2+) contacts are provided by C341, H392, and H521.

It belongs to the class-II aminoacyl-tRNA synthetase family. In terms of assembly, homodimer. It depends on Zn(2+) as a cofactor.

It is found in the cytoplasm. The enzyme catalyses tRNA(Thr) + L-threonine + ATP = L-threonyl-tRNA(Thr) + AMP + diphosphate + H(+). Its function is as follows. Catalyzes the attachment of threonine to tRNA(Thr) in a two-step reaction: L-threonine is first activated by ATP to form Thr-AMP and then transferred to the acceptor end of tRNA(Thr). Also edits incorrectly charged L-seryl-tRNA(Thr). The sequence is that of Threonine--tRNA ligase from Deinococcus geothermalis (strain DSM 11300 / CIP 105573 / AG-3a).